The chain runs to 340 residues: Replication factor C subunit 3 (340 aa).

Residue S2 is modified to N-acetylserine. ATP-binding positions include 16–19, R20, Y28, 53–61, N148, and R206; these read VEKY and GPPGTGKTS.

Belongs to the activator 1 small subunits family. As to quaternary structure, replication factor C (RFC) is a heteropentamer of subunits RFC1, RFC2, RFC3, RFC4 and RFC5 and forms a complex with POL30/PCNA in the presence of ATP. Component of the RAD24-RFC complex which consists of RAD14, RFC2, RFC3, RFC4 and RFC5 and associates with the checkpoint clamp DDC1:MEC3:RAD17 complex. Component of the ELG1-RFC complex which consists of ELG1, RFC2, RFC3, RFC4 and RFC5. Component of the CTF18-RFC complex, which consists of CTF18, CTF8, DCC1, RFC2, RFC3, RFC4 and RFC5. RFC3 interacts with ECO1 and POL30/PCNA.

Its subcellular location is the nucleus. Its function is as follows. Component of ATP-dependent clamp loader (RFC and RFC-like) complexes for DNA clamps, such as the POL30/PCNA homotrimer and the checkpoint clamp DDC1:MEC3:RAD17 complex. During a clamp loading circle, the RFC:clamp complex binds to DNA and the recognition of the double-stranded/single-stranded junction stimulates ATP hydrolysis by RFC. The complex presumably provides bipartite ATP sites in which one subunit supplies a catalytic site for hydrolysis of ATP bound to the neighboring subunit. Dissociation of RFC from the clamp leaves the clamp encircling DNA. Component of the replication factor C (RFC or activator 1) complex which loads POL30/PCNA and acts during elongation of primed DNA templates by DNA polymerase delta and epsilon. RFC has an essential but redundant activity in sister chromatid cohesion establishment. Component of the RFC-like complex CTF18-RFC which is required for efficient establishment of chromosome cohesion during S-phase and may load or unload POL30/PCNA. Component of the RFC-like RAD24-RFC complex which loads the checkpoint clamp DDC1:MEC3:RAD17 complex and is involved in DNA repair pathways. Component of the RFC-like ELG1-RFC complex which appears to have a role in DNA replication, replication fork re-start, recombination and repair. RFC3 supplies a catalytic site to the ATP site of RFC4. The protein is Replication factor C subunit 3 (RFC3) of Saccharomyces cerevisiae (strain ATCC 204508 / S288c) (Baker's yeast).